A 633-amino-acid chain; its full sequence is Threonine--tRNA ligase (633 aa).

The interval 1 to 143 (MRALFLHSNR…SRTIKPKKVK (143 aa)) is editing domain. Catalytic regions lie at residues 220–515 (NPLN…PVLP) and 221–515 (PLND…PVLP). Residues Cys314, His365, and His488 each coordinate Zn(2+).

It belongs to the class-II aminoacyl-tRNA synthetase family. Homodimer. Zn(2+) is required as a cofactor.

The protein localises to the cytoplasm. It catalyses the reaction tRNA(Thr) + L-threonine + ATP = L-threonyl-tRNA(Thr) + AMP + diphosphate + H(+). Its function is as follows. Catalyzes the attachment of threonine to tRNA(Thr) in a two-step reaction: L-threonine is first activated by ATP to form Thr-AMP and then transferred to the acceptor end of tRNA(Thr). Also edits incorrectly charged L-seryl-tRNA(Thr). The sequence is that of Threonine--tRNA ligase from Nanoarchaeum equitans (strain Kin4-M).